Here is a 164-residue protein sequence, read N- to C-terminus: Interleukin-10 (164 aa).

Residues 1 to 18 (MPSSALLCCLIFLARVAA) form the signal peptide. Intrachain disulfides connect Cys30–Cys126 and Cys80–Cys132. A glycan (N-linked (GlcNAc...) asparagine) is linked at Asn134.

This sequence belongs to the IL-10 family. Homodimer. Interacts with IL10RA and IL10RB.

The protein resides in the secreted. In terms of biological role, major immune regulatory cytokine that acts on many cells of the immune system where it has profound anti-inflammatory functions, limiting excessive tissue disruption caused by inflammation. Mechanistically, IL10 binds to its heterotetrameric receptor comprising IL10RA and IL10RB leading to JAK1 and STAT2-mediated phosphorylation of STAT3. In turn, STAT3 translocates to the nucleus where it drives expression of anti-inflammatory mediators. Targets antigen-presenting cells (APCs) such as macrophages and monocytes and inhibits their release of pro-inflammatory cytokines including granulocyte-macrophage colony-stimulating factor /GM-CSF, granulocyte colony-stimulating factor/G-CSF, IL-1 alpha, IL-1 beta, IL-6, IL-8 and TNF-alpha. Also interferes with antigen presentation by reducing the expression of MHC-class II and co-stimulatory molecules, thereby inhibiting their ability to induce T cell activation. In addition, controls the inflammatory response of macrophages by reprogramming essential metabolic pathways including mTOR signaling. The chain is Interleukin-10 (IL10) from Orcinus orca (Killer whale).